A 333-amino-acid polypeptide reads, in one-letter code: G-protein coupled receptor 146 (333 aa).

Over 1–21 the chain is Extracellular; it reads MWSCEDLNYTNSGEEQYLCNE. Asn8 carries N-linked (GlcNAc...) asparagine glycosylation. The chain crosses the membrane as a helical span at residues 22–42; the sequence is FHLFLFIFSVLYLIICFPVGL. Residues 43–65 are Cytoplasmic-facing; sequence CYNVQLVLVNLYNKATMTMPDVY. The chain crosses the membrane as a helical span at residues 66 to 86; that stretch reads FVNMAIAGLIINAVAPVYLFG. The Extracellular segment spans residues 87–102; it reads PAYTKWSLWSFGNEVY. The chain crosses the membrane as a helical span at residues 103-123; it reads ITLLILFNVSSLVIMYSTTLL. Topologically, residues 124–146 are cytoplasmic; the sequence is SLDYYIECALPRTYMSSVYNTKH. Residues 147 to 167 traverse the membrane as a helical segment; the sequence is VCGFIWGGAVLTSFSSLLFYI. Over 168–189 the chain is Extracellular; the sequence is CNHVSTKIIECSKMQNREAADA. The helical transmembrane segment at 190-210 threads the bilayer; that stretch reads IMVLIGYVVPIIAVIYALVLI. The Cytoplasmic segment spans residues 211–234; it reads LQIRKEATPLDQESGRLDPSVHRL. A helical membrane pass occupies residues 235 to 255; the sequence is LIATVCTQFILWTPYYVTLLV. Topologically, residues 256–275 are extracellular; that stretch reads NTFMDARVKSSNTFYIRIFQ. A helical membrane pass occupies residues 276 to 296; the sequence is FTEGLSNFLAFSSSFVLPLIH. Topologically, residues 297–333 are cytoplasmic; it reads RHINKNFSGKLQRLLKRLHCGSQGCTHEHTVVQQVMT.

This sequence belongs to the G-protein coupled receptor 1 family.

Its subcellular location is the cell membrane. G-protein coupled receptor required for the regulation of plasma cholesterol levels. The polypeptide is G-protein coupled receptor 146 (gpr146) (Xenopus laevis (African clawed frog)).